A 408-amino-acid chain; its full sequence is Peptidase T (408 aa).

Histidine 78 is a binding site for Zn(2+). Residue aspartate 80 is part of the active site. Aspartate 140 contacts Zn(2+). Glutamate 174 functions as the Proton acceptor in the catalytic mechanism. Zn(2+)-binding residues include glutamate 175, aspartate 197, and histidine 379.

It belongs to the peptidase M20B family. Zn(2+) is required as a cofactor.

The protein resides in the cytoplasm. It catalyses the reaction Release of the N-terminal residue from a tripeptide.. Functionally, cleaves the N-terminal amino acid of tripeptides. This Staphylococcus aureus (strain bovine RF122 / ET3-1) protein is Peptidase T.